The following is a 153-amino-acid chain: Interleukin-2 (153 aa).

The N-terminal stretch at 1–20 (MYKVQLLSCIALTLALLTSS) is a signal peptide. A glycan (O-linked (GalNAc...) threonine) is linked at T23. C78 and C125 are joined by a disulfide. A glycan (N-linked (GlcNAc...) asparagine) is linked at N111.

Belongs to the IL-2 family.

Its subcellular location is the secreted. In terms of biological role, cytokine produced by activated CD4-positive helper T-cells and to a lesser extend activated CD8-positive T-cells and natural killer (NK) cells that plays pivotal roles in the immune response and tolerance. Binds to a receptor complex composed of either the high-affinity trimeric IL-2R (IL2RA/CD25, IL2RB/CD122 and IL2RG/CD132) or the low-affinity dimeric IL-2R (IL2RB and IL2RG). Interaction with the receptor leads to oligomerization and conformation changes in the IL-2R subunits resulting in downstream signaling starting with phosphorylation of JAK1 and JAK3. In turn, JAK1 and JAK3 phosphorylate the receptor to form a docking site leading to the phosphorylation of several substrates including STAT5. This process leads to activation of several pathways including STAT, phosphoinositide-3-kinase/PI3K and mitogen-activated protein kinase/MAPK pathways. Functions as a T-cell growth factor and can increase NK-cell cytolytic activity as well. Promotes strong proliferation of activated B-cells and subsequently immunoglobulin production. Plays a pivotal role in regulating the adaptive immune system by controlling the survival and proliferation of regulatory T-cells, which are required for the maintenance of immune tolerance. Moreover, participates in the differentiation and homeostasis of effector T-cell subsets, including Th1, Th2, Th17 as well as memory CD8-positive T-cells. In Oryctolagus cuniculus (Rabbit), this protein is Interleukin-2 (IL2).